Reading from the N-terminus, the 99-residue chain is Integration host factor subunit alpha (99 aa).

It belongs to the bacterial histone-like protein family. Heterodimer of an alpha and a beta chain.

Its function is as follows. This protein is one of the two subunits of integration host factor, a specific DNA-binding protein that functions in genetic recombination as well as in transcriptional and translational control. In Psychrobacter arcticus (strain DSM 17307 / VKM B-2377 / 273-4), this protein is Integration host factor subunit alpha.